A 214-amino-acid chain; its full sequence is Large ribosomal subunit protein uL18 (214 aa).

It belongs to the universal ribosomal protein uL18 family. As to quaternary structure, part of the 50S ribosomal subunit. Contacts the 5S and 23S rRNAs.

Its function is as follows. This is one of the proteins that bind and probably mediate the attachment of the 5S RNA into the large ribosomal subunit, where it forms part of the central protuberance. The sequence is that of Large ribosomal subunit protein uL18 from Aeropyrum pernix (strain ATCC 700893 / DSM 11879 / JCM 9820 / NBRC 100138 / K1).